Here is a 410-residue protein sequence, read N- to C-terminus: Benzene 1,2-dioxygenase system ferredoxin--NAD(+) reductase subunit (410 aa).

4 to 35 provides a ligand contact to FAD; that stretch reads HVAIIGNGVAGFTTAQALRAEGYEGRISLIGE. Position 145–173 (145–173) interacts with NAD(+); sequence RLLIVGGGLIGCEVATTARKLGLSVTILE.

This sequence belongs to the bacterial ring-hydroxylating dioxygenase ferredoxin reductase family. As to quaternary structure, this dioxygenase system consists of four proteins: the two subunits of the hydroxylase component (BedC1 and BedC2), a ferredoxin (BedB) and a ferredoxin reductase (BedA). FAD is required as a cofactor.

The enzyme catalyses 2 reduced [2Fe-2S]-[ferredoxin] + NAD(+) + H(+) = 2 oxidized [2Fe-2S]-[ferredoxin] + NADH. The protein operates within aromatic compound metabolism; benzene degradation; catechol from benzene: step 1/2. Its function is as follows. Part of the electron transfer component of benzene 1,2-dioxygenase, transfers electrons from ferredoxin to NADH. The polypeptide is Benzene 1,2-dioxygenase system ferredoxin--NAD(+) reductase subunit (bedA) (Pseudomonas putida (Arthrobacter siderocapsulatus)).